The sequence spans 350 residues: Secreted effector protein PipB2 (350 aa).

Pentapeptide repeat domains are found at residues 162 to 201, 202 to 241, 247 to 286, and 287 to 326; these read ANLT…NLSG, TSLG…SLLG, CNCS…IMEG, and AVLT…TLTD.

Interacts with the host kinesin light chain (KLC), a subunit of the kinesin-1 motor complex.

It is found in the secreted. It localises to the host membrane. In terms of biological role, effector proteins function to alter host cell physiology and promote bacterial survival in host tissues. Involved in the reorganization of late endosome/lysosome (LE/Lys) compartments in mammalian cells. Necessary and sufficient to link kinesin-1 onto the Salmonella-containing vacuole (SCV) membrane. Required for centrifugal extension of lysosomal glycoprotein-rich membrane tubules, known as Salmonella-induced filaments (Sifs), away from the SCV and toward the cell periphery. Required for virulence, but not for intracellular survival and replication in phagocytic cells. In Salmonella typhimurium (strain LT2 / SGSC1412 / ATCC 700720), this protein is Secreted effector protein PipB2 (pipB2).